Here is a 309-residue protein sequence, read N- to C-terminus: Porphobilinogen deaminase (309 aa).

Residue Cys241 is modified to S-(dipyrrolylmethanemethyl)cysteine.

Belongs to the HMBS family. In terms of assembly, monomer. Requires dipyrromethane as cofactor.

It carries out the reaction 4 porphobilinogen + H2O = hydroxymethylbilane + 4 NH4(+). The protein operates within porphyrin-containing compound metabolism; protoporphyrin-IX biosynthesis; coproporphyrinogen-III from 5-aminolevulinate: step 2/4. Functionally, tetrapolymerization of the monopyrrole PBG into the hydroxymethylbilane pre-uroporphyrinogen in several discrete steps. The polypeptide is Porphobilinogen deaminase (Geobacillus kaustophilus (strain HTA426)).